The following is a 665-amino-acid chain: F-box/WD repeat-containing protein lin-23 (665 aa).

In terms of domain architecture, F-box spans 81–127 (RDFISNLPAHLVELILFNVNSDSLKSCEEVSTSWRCALARGQHWKKL). WD repeat units follow at residues 220 to 257 (ENSK…CSRI), 260 to 299 (GHTG…KTLI), 301 to 337 (HCEA…DITI), 343 to 380 (GHRA…FVRT), 383 to 420 (GHRR…CLRV), 423 to 460 (GHEE…DPRA), and 472 to 509 (QHTG…PSGL). The disordered stretch occupies residues 574-665 (AAAEAARGAG…VDEEMPDGGP (92 aa)). 2 stretches are compositionally biased toward acidic residues: residues 584 to 595 (DNDESSSEEDLD) and 655 to 665 (DVDEEMPDGGP).

As to quaternary structure, part of a SCF (SKP1-cullin-F-box) protein ligase complex.

Its subcellular location is the cytoplasm. Functions cell autonomously to negatively regulate cell cycle progression. Required to restrain cell proliferation in response to developmental cues. Probably recognizes and binds to some proteins and promotes their ubiquitination and degradation. The protein is F-box/WD repeat-containing protein lin-23 (lin-23) of Caenorhabditis elegans.